The following is a 562-amino-acid chain: Protein wntless (562 aa).

Residues M1 to K13 lie on the Cytoplasmic side of the membrane. The chain crosses the membrane as a helical span at residues L14–L34. The Lumenal portion of the chain corresponds to Y35–Q239. N-linked (GlcNAc...) asparagine glycosylation is found at N58 and N103. Residues V240–W260 traverse the membrane as a helical segment. The Cytoplasmic segment spans residues R261–P270. Residues A271–L291 form a helical membrane-spanning segment. At E292–Q311 the chain is on the lumenal side. The helical transmembrane segment at G312–I332 threads the bilayer. The Cytoplasmic segment spans residues Q333–R344. A helical membrane pass occupies residues Y345–C365. At E366–S390 the chain is on the lumenal side. Residues F391–W411 traverse the membrane as a helical segment. The Cytoplasmic portion of the chain corresponds to K412–R441. Residues F442–M462 form a helical membrane-spanning segment. The Lumenal segment spans residues G463–S482. A helical membrane pass occupies residues A483–Y503. Topologically, residues A504 to D562 are cytoplasmic. The interval S538–D562 is disordered. The segment covering N539–T556 has biased composition (polar residues).

The protein belongs to the wntless family. As to quaternary structure, interacts with wg; in the Golgi. Interacts with Vps35, a component of the retromer complex; wls stability is regulated by Vps35.

It localises to the presynaptic cell membrane. It is found in the postsynaptic cell membrane. The protein localises to the cell membrane. Its subcellular location is the endoplasmic reticulum membrane. The protein resides in the endosome membrane. It localises to the golgi apparatus membrane. Functionally, a segment polarity gene required for wingless (wg)-dependent patterning processes, acting in both wg-sending cells and wg-target cells. In non-neuronal cells wls directs wg secretion. The wls traffic loop encompasses the Golgi, the cell surface, an endocytic compartment and a retrograde route leading back to the Golgi, and involves clathrin-mediated endocytosis and the retromer complex (a conserved protein complex consisting of Vps35 and Vps26). In neuronal cells (the larval motorneuron NMJ), the wg signal moves across the synapse via the release of wls-containing exosome-like vesicles. Postsynaptic wls is required for the trafficking of fz2 through the fz2-interacting protein Grip. The sequence is that of Protein wntless from Drosophila mojavensis (Fruit fly).